The sequence spans 225 residues: UPF0173 metal-dependent hydrolase Pcal_1074 (225 aa).

It belongs to the UPF0173 family.

This chain is UPF0173 metal-dependent hydrolase Pcal_1074, found in Pyrobaculum calidifontis (strain DSM 21063 / JCM 11548 / VA1).